The following is a 73-amino-acid chain: Exodeoxyribonuclease 7 small subunit (73 aa).

Belongs to the XseB family. As to quaternary structure, heterooligomer composed of large and small subunits.

It is found in the cytoplasm. The enzyme catalyses Exonucleolytic cleavage in either 5'- to 3'- or 3'- to 5'-direction to yield nucleoside 5'-phosphates.. Functionally, bidirectionally degrades single-stranded DNA into large acid-insoluble oligonucleotides, which are then degraded further into small acid-soluble oligonucleotides. The protein is Exodeoxyribonuclease 7 small subunit of Streptococcus mutans serotype c (strain ATCC 700610 / UA159).